The chain runs to 270 residues: Elongation factor Ts (270 aa).

An involved in Mg(2+) ion dislocation from EF-Tu region spans residues 77–80; the sequence is TDFV.

The protein belongs to the EF-Ts family.

The protein localises to the cytoplasm. Functionally, associates with the EF-Tu.GDP complex and induces the exchange of GDP to GTP. It remains bound to the aminoacyl-tRNA.EF-Tu.GTP complex up to the GTP hydrolysis stage on the ribosome. In Nocardioides sp. (strain ATCC BAA-499 / JS614), this protein is Elongation factor Ts.